A 237-amino-acid chain; its full sequence is NAD(P)H-quinone oxidoreductase subunit K, chloroplastic (237 aa).

4 residues coordinate [4Fe-4S] cluster: cysteine 55, cysteine 56, cysteine 120, and cysteine 151.

It belongs to the complex I 20 kDa subunit family. As to quaternary structure, NDH is composed of at least 16 different subunits, 5 of which are encoded in the nucleus. [4Fe-4S] cluster is required as a cofactor.

It is found in the plastid. It localises to the chloroplast thylakoid membrane. The catalysed reaction is a plastoquinone + NADH + (n+1) H(+)(in) = a plastoquinol + NAD(+) + n H(+)(out). It carries out the reaction a plastoquinone + NADPH + (n+1) H(+)(in) = a plastoquinol + NADP(+) + n H(+)(out). Its function is as follows. NDH shuttles electrons from NAD(P)H:plastoquinone, via FMN and iron-sulfur (Fe-S) centers, to quinones in the photosynthetic chain and possibly in a chloroplast respiratory chain. The immediate electron acceptor for the enzyme in this species is believed to be plastoquinone. Couples the redox reaction to proton translocation, and thus conserves the redox energy in a proton gradient. In Nephroselmis olivacea (Green alga), this protein is NAD(P)H-quinone oxidoreductase subunit K, chloroplastic.